The following is a 570-amino-acid chain: Urease subunit alpha (570 aa).

Positions 131-570 (GGFDSHIHFI…LPLAQRYFMF (440 aa)) constitute a Urease domain. 3 residues coordinate Ni(2+): histidine 136, histidine 138, and lysine 219. Lysine 219 carries the N6-carboxylysine modification. Residue histidine 221 participates in substrate binding. Histidine 248 and histidine 274 together coordinate Ni(2+). Catalysis depends on histidine 322, which acts as the Proton donor. Position 362 (aspartate 362) interacts with Ni(2+).

The protein belongs to the metallo-dependent hydrolases superfamily. Urease alpha subunit family. In terms of assembly, heterotrimer of UreA (gamma), UreB (beta) and UreC (alpha) subunits. Three heterotrimers associate to form the active enzyme. Ni cation is required as a cofactor. Post-translationally, carboxylation allows a single lysine to coordinate two nickel ions.

It localises to the cytoplasm. It carries out the reaction urea + 2 H2O + H(+) = hydrogencarbonate + 2 NH4(+). The protein operates within nitrogen metabolism; urea degradation; CO(2) and NH(3) from urea (urease route): step 1/1. This chain is Urease subunit alpha, found in Rhodopseudomonas palustris (strain ATCC BAA-98 / CGA009).